The sequence spans 337 residues: Eukaryotic translation initiation factor 3 subunit H (337 aa).

Residues 21 to 153 (VQCDGLAVMK…LKAYRLTPQA (133 aa)) form the MPN domain.

The protein belongs to the eIF-3 subunit H family. As to quaternary structure, component of the eukaryotic translation initiation factor 3 (eIF-3) complex.

The protein localises to the cytoplasm. Its function is as follows. Component of the eukaryotic translation initiation factor 3 (eIF-3) complex, which is involved in protein synthesis of a specialized repertoire of mRNAs and, together with other initiation factors, stimulates binding of mRNA and methionyl-tRNAi to the 40S ribosome. The eIF-3 complex specifically targets and initiates translation of a subset of mRNAs involved in cell proliferation. In Bombyx mori (Silk moth), this protein is Eukaryotic translation initiation factor 3 subunit H.